The primary structure comprises 73 residues: Pollen allergen Amb t 5 (73 aa).

The signal sequence occupies residues 1–20 (MKNIFMLTLFILIITSTIKA). A propeptide spanning residues 21–33 (IGSTNEVDEIKQE) is cleaved from the precursor. 4 disulfides stabilise this stretch: cysteine 38–cysteine 68, cysteine 44–cysteine 59, cysteine 51–cysteine 61, and cysteine 52–cysteine 72.

Monomer.

This Ambrosia trifida (Giant ragweed) protein is Pollen allergen Amb t 5.